We begin with the raw amino-acid sequence, 375 residues long: Esterase AN6793 (375 aa).

Residues 138–158 (RHPQPGLDPGHGHRHKRMPPL) form a disordered region.

It belongs to the sidJ hydrolase family. In terms of assembly, homodimer.

It participates in secondary metabolite biosynthesis. Its function is as follows. Esterase; part of a cluster that mediates the biosynthesis of a yet undetermined secondary metabolite. With the HR-PKS AN6791, produces a pathway intermediate compound with molecular weight 258. The polypeptide is Esterase AN6793 (Emericella nidulans (strain FGSC A4 / ATCC 38163 / CBS 112.46 / NRRL 194 / M139) (Aspergillus nidulans)).